Reading from the N-terminus, the 161-residue chain is Peptidyl-prolyl cis-trans isomerase-like 1 (161 aa).

Residues 1–155 (MATDVVFDTS…DEVKIIRAKV (155 aa)) form the PPIase cyclophilin-type domain.

Belongs to the cyclophilin-type PPIase family. PPIL1 subfamily.

The catalysed reaction is [protein]-peptidylproline (omega=180) = [protein]-peptidylproline (omega=0). In terms of biological role, PPIases accelerate the folding of proteins. It catalyzes the cis-trans isomerization of proline imidic peptide bonds in oligopeptides. The sequence is that of Peptidyl-prolyl cis-trans isomerase-like 1 (cyp1) from Aspergillus fumigatus (strain ATCC MYA-4609 / CBS 101355 / FGSC A1100 / Af293) (Neosartorya fumigata).